Reading from the N-terminus, the 564-residue chain is Pyranose 2-oxidase (564 aa).

A propeptide spanning residues 1–25 is cleaved from the precursor; the sequence is MPIRLSKEKINDLLQRSQGDLTSSQ. Residue His158 is modified to Tele-8alpha-FAD histidine. Gln392 and His394 together coordinate substrate. His498 acts as the Proton acceptor in catalysis. The active site involves Asn541.

Belongs to the GMC oxidoreductase family. As to quaternary structure, homotetramer. The cofactor is FAD.

It catalyses the reaction D-glucose + O2 = 2-dehydro-D-glucose + H2O2. In terms of biological role, catalyzes the oxidation of various aldopyranoses and disaccharides on carbon-2 to the corresponding 2-keto sugars concomitant with the reduction of O(2) to H(2)O(2). The preferred substrate is D-glucose which is converted to 2-dehydro-D-glucose. Acts also on D-xylose, L-sorbose, D-galactose and 1,5-anhydroglucitol, a diagnostic marker of diabetes mellitus. The polypeptide is Pyranose 2-oxidase (p2ox) (Tricholoma matsutake (Matsutake mushroom)).